A 364-amino-acid polypeptide reads, in one-letter code: Alpha-2-HS-glycoprotein (364 aa).

A signal peptide (or 17) is located at residues 1–15; the sequence is MKSFLLLFCLAQLCS. In terms of domain architecture, Cystatin fetuin-A-type 1 spans 27-133; it reads YKEPACDDPD…QFSVLFTKCD (107 aa). 6 cysteine pairs are disulfide-bonded: Cys32/Cys355, Cys89/Cys100, Cys114/Cys132, Cys146/Cys149, Cys208/Cys219, and Cys230/Cys248. Asn99 carries an N-linked (GlcNAc...) asparagine glycan. 3 positions are modified to phosphoserine: Ser134, Ser135, and Ser138. The region spanning 144-256 is the Cystatin fetuin-A-type 2 domain; it reads KLCPDCPLLA…TCTLFQTQPV (113 aa). N-linked (GlcNAc...) asparagine glycans are attached at residues Asn156 and Asn176. Residue Ser301 is glycosylated (O-linked (GalNAc...) serine). Thr319 bears the Phosphothreonine mark. Phosphoserine is present on residues Ser321, Ser325, Ser328, and Ser330. O-linked (GalNAc...) threonine glycosylation occurs at Thr339.

This sequence belongs to the fetuin family. In terms of processing, phosphorylated by FAM20C in the extracellular medium.

Its subcellular location is the secreted. In Ovis aries (Sheep), this protein is Alpha-2-HS-glycoprotein (AHSG).